The sequence spans 40 residues: Cytolysin EnT (40 aa).

The tract at residues 3 to 12 (ALAGTIIEGA) is plays an important role in the hemolytic activity. Residues 11 to 30 (GASLTFSVLTTILDALGSVS) form an N-terminal region region.

Belongs to the actinoporin family. Sea anemone subfamily. In terms of assembly, octamer or nonamer in membranes. Monomer in the soluble state.

It is found in the secreted. Its subcellular location is the nematocyst. The protein resides in the target cell membrane. In terms of biological role, pore-forming protein that forms cations-selective hydrophilic pores of around 1 nm and causes cytolysis. Pore formation is a multi-step process that involves specific recognition of membrane sphingomyelin (but neither cholesterol nor phosphatidylcholine) using aromatic rich region and adjacent phosphocholine (POC) binding site, firm binding to the membrane (mainly driven by hydrophobic interactions) accompanied by the transfer of the N-terminal region to the lipid-water interface and finally pore formation after oligomerization of monomers. This toxin shows hemolytic activities. The chain is Cytolysin EnT from Entacmaea quadricolor (Bubble-tip anemone).